The primary structure comprises 673 residues: Translation factor GUF1 homolog, mitochondrial (673 aa).

The 193-residue stretch at 68–260 (ERIRNFSIIA…AVIERIPSPP (193 aa)) folds into the tr-type G domain. Residues 77-84 (AHVDHGKS), 153-157 (DTPGH), and 207-210 (NKID) contribute to the GTP site.

It belongs to the TRAFAC class translation factor GTPase superfamily. Classic translation factor GTPase family. LepA subfamily.

The protein localises to the mitochondrion inner membrane. It catalyses the reaction GTP + H2O = GDP + phosphate + H(+). Functionally, promotes mitochondrial protein synthesis. May act as a fidelity factor of the translation reaction, by catalyzing a one-codon backward translocation of tRNAs on improperly translocated ribosomes. Binds to mitochondrial ribosomes in a GTP-dependent manner. This Ricinus communis (Castor bean) protein is Translation factor GUF1 homolog, mitochondrial.